Reading from the N-terminus, the 409-residue chain is Glycosyltransferase GtfE (409 aa).

This sequence belongs to the glycosyltransferase 28 family.

It participates in antibiotic biosynthesis; vancomycin biosynthesis. Its function is as follows. D-glucosyltransferase that acts on the aglycone core, transferring D-glucose to the phenolic hydroxyl of OH-Phegly(4) to form a devancoaminyl-vancomycin (DVV) intermediate in the biosynthesis of glycopeptide antibiotic vancomycin. Also able to glycosylate A47934, an antibiotic with a teicoplanin-like heptapeptide, but lacking sugar residues. The sequence is that of Glycosyltransferase GtfE (gtfE) from Amycolatopsis orientalis (Nocardia orientalis).